The primary structure comprises 616 residues: Chaperone protein HscA (616 aa).

This sequence belongs to the heat shock protein 70 family.

Its function is as follows. Chaperone involved in the maturation of iron-sulfur cluster-containing proteins. Has a low intrinsic ATPase activity which is markedly stimulated by HscB. Involved in the maturation of IscU. This Serratia proteamaculans (strain 568) protein is Chaperone protein HscA.